A 285-amino-acid polypeptide reads, in one-letter code: Tryptophan synthase alpha chain (285 aa).

Active-site proton acceptor residues include Glu53 and Asp64.

This sequence belongs to the TrpA family. Tetramer of two alpha and two beta chains.

It carries out the reaction (1S,2R)-1-C-(indol-3-yl)glycerol 3-phosphate + L-serine = D-glyceraldehyde 3-phosphate + L-tryptophan + H2O. It participates in amino-acid biosynthesis; L-tryptophan biosynthesis; L-tryptophan from chorismate: step 5/5. Functionally, the alpha subunit is responsible for the aldol cleavage of indoleglycerol phosphate to indole and glyceraldehyde 3-phosphate. The sequence is that of Tryptophan synthase alpha chain from Bordetella bronchiseptica (strain ATCC BAA-588 / NCTC 13252 / RB50) (Alcaligenes bronchisepticus).